The sequence spans 143 residues: Transcriptional regulator MraZ (143 aa).

SpoVT-AbrB domains lie at 5–47 (EYNH…SMDE) and 76–119 (ATEC…SSDQ).

This sequence belongs to the MraZ family. Forms oligomers.

It localises to the cytoplasm. The protein localises to the nucleoid. This is Transcriptional regulator MraZ from Alkaliphilus metalliredigens (strain QYMF).